The primary structure comprises 569 residues: 2-succinyl-5-enolpyruvyl-6-hydroxy-3-cyclohexene-1-carboxylate synthase (569 aa).

This sequence belongs to the TPP enzyme family. MenD subfamily. As to quaternary structure, homodimer. It depends on Mg(2+) as a cofactor. Mn(2+) serves as cofactor. Thiamine diphosphate is required as a cofactor.

It catalyses the reaction isochorismate + 2-oxoglutarate + H(+) = 5-enolpyruvoyl-6-hydroxy-2-succinyl-cyclohex-3-ene-1-carboxylate + CO2. Its pathway is quinol/quinone metabolism; 1,4-dihydroxy-2-naphthoate biosynthesis; 1,4-dihydroxy-2-naphthoate from chorismate: step 2/7. It participates in quinol/quinone metabolism; menaquinone biosynthesis. Catalyzes the thiamine diphosphate-dependent decarboxylation of 2-oxoglutarate and the subsequent addition of the resulting succinic semialdehyde-thiamine pyrophosphate anion to isochorismate to yield 2-succinyl-5-enolpyruvyl-6-hydroxy-3-cyclohexene-1-carboxylate (SEPHCHC). In Haemophilus ducreyi (strain 35000HP / ATCC 700724), this protein is 2-succinyl-5-enolpyruvyl-6-hydroxy-3-cyclohexene-1-carboxylate synthase.